The primary structure comprises 397 residues: Lipid-A-disaccharide synthase (397 aa).

It belongs to the LpxB family.

The catalysed reaction is a lipid X + a UDP-2-N,3-O-bis[(3R)-3-hydroxyacyl]-alpha-D-glucosamine = a lipid A disaccharide + UDP + H(+). The protein operates within bacterial outer membrane biogenesis; LPS lipid A biosynthesis. Its function is as follows. Condensation of UDP-2,3-diacylglucosamine and 2,3-diacylglucosamine-1-phosphate to form lipid A disaccharide, a precursor of lipid A, a phosphorylated glycolipid that anchors the lipopolysaccharide to the outer membrane of the cell. The chain is Lipid-A-disaccharide synthase from Mannheimia succiniciproducens (strain KCTC 0769BP / MBEL55E).